A 252-amino-acid chain; its full sequence is uncharacterized protein (252 aa).

Positions 1-22 (MIHSKRLRLWLYLVLLAVFISA) are cleaved as a signal peptide. C23 is lipidated: N-palmitoyl cysteine. A lipid anchor (S-diacylglycerol cysteine) is attached at C23.

This sequence belongs to the staphylococcal tandem lipoprotein family.

Its subcellular location is the cell membrane. This is an uncharacterized protein from Staphylococcus aureus (strain MW2).